Reading from the N-terminus, the 63-residue chain is Cytochrome c oxidase subunit 5C (63 aa).

The helical transmembrane segment at 16–34 (VVKEICIGLTLGLVAGGLW) threads the bilayer.

This sequence belongs to the cytochrome c oxidase subunit 5C family.

It localises to the mitochondrion inner membrane. Functionally, this protein is one of the nuclear-coded polypeptide chains of cytochrome c oxidase, the terminal oxidase in mitochondrial electron transport. This chain is Cytochrome c oxidase subunit 5C (COX5C), found in Oryza sativa subsp. japonica (Rice).